A 184-amino-acid polypeptide reads, in one-letter code: ATP synthase subunit b, chloroplastic (184 aa).

A helical transmembrane segment spans residues leucine 27–leucine 49.

The protein belongs to the ATPase B chain family. F-type ATPases have 2 components, F(1) - the catalytic core - and F(0) - the membrane proton channel. F(1) has five subunits: alpha(3), beta(3), gamma(1), delta(1), epsilon(1). F(0) has four main subunits: a(1), b(1), b'(1) and c(10-14). The alpha and beta chains form an alternating ring which encloses part of the gamma chain. F(1) is attached to F(0) by a central stalk formed by the gamma and epsilon chains, while a peripheral stalk is formed by the delta, b and b' chains.

Its subcellular location is the plastid. The protein resides in the chloroplast thylakoid membrane. Its function is as follows. F(1)F(0) ATP synthase produces ATP from ADP in the presence of a proton or sodium gradient. F-type ATPases consist of two structural domains, F(1) containing the extramembraneous catalytic core and F(0) containing the membrane proton channel, linked together by a central stalk and a peripheral stalk. During catalysis, ATP synthesis in the catalytic domain of F(1) is coupled via a rotary mechanism of the central stalk subunits to proton translocation. Functionally, component of the F(0) channel, it forms part of the peripheral stalk, linking F(1) to F(0). This Ceratophyllum demersum (Rigid hornwort) protein is ATP synthase subunit b, chloroplastic.